The sequence spans 450 residues: MNKNIIQIYLFVFILLLKQHIVILKNEEFTNPYSIRKKDIKAIVNVNNKLKSINIHKLDNINKKDLLGSYNENYILIKLKKQDIFSKKLSTYYGEVQIGEQSENNMNVLFDTGSSQVWILNDTCKNSLCNNIHSKYKRTKSFVYKYDKKGLPSVIEIFYLSGKIVAFEGYDTIYLGKKLKIPHTNISFATKVDIPILEEFKWDGIIGLGFQNGDSIKRGIKPFLDILKDDKILTNKNYKNQFGYYLSDKEGYITLGGIDNRLKNTPDEEIIWTPVSTEMGYWTIQIMGIRKEYVNNHFEENKEEEEVIVKYEAFHDGGKNSIIDTGTYLIYAPKNTMENYLKDLKINNCDEKYNLPHLIFQIKSDEIKTIKGSAIIEIVLTPNDYVIEYVDKKNNTKECILGIQPDEQSEEDNVDGWTLGQVFLKAYYTIFDKDNLKIGFVRSKRNVTLR.

The signal sequence occupies residues 1 to 24; that stretch reads MNKNIIQIYLFVFILLLKQHIVIL. The 350-residue stretch at 92-441 folds into the Peptidase A1 domain; sequence YYGEVQIGEQ…DKDNLKIGFV (350 aa). Catalysis depends on residues aspartate 111 and aspartate 324.

Belongs to the peptidase A1 family.

The protein localises to the cytoplasm. This is Plasmepsin VII from Plasmodium falciparum (isolate NF54).